The following is a 95-amino-acid chain: Small ribosomal subunit protein bS18 (95 aa).

Belongs to the bacterial ribosomal protein bS18 family. In terms of assembly, part of the 30S ribosomal subunit. Forms a tight heterodimer with protein bS6.

In terms of biological role, binds as a heterodimer with protein bS6 to the central domain of the 16S rRNA, where it helps stabilize the platform of the 30S subunit. This is Small ribosomal subunit protein bS18 from Rickettsia rickettsii (strain Sheila Smith).